Here is a 722-residue protein sequence, read N- to C-terminus: Cellulose synthase-like protein G2 (722 aa).

The next 2 membrane-spanning stretches (helical) occupy residues Ile-25 to Ile-45 and Thr-51 to Thr-71. Active-site residues include Asp-139 and Asp-437. Transmembrane regions (helical) follow at residues Phe-514 to Ile-534, Phe-548 to Leu-568, Trp-583 to Leu-605, Pro-635 to Met-655, Gly-660 to Val-680, and Ile-702 to Lys-722.

This sequence belongs to the glycosyltransferase 2 family. Plant cellulose synthase-like G subfamily. In terms of tissue distribution, expressed in young seedlings, primarily in the vascular tissue.

The protein resides in the golgi apparatus membrane. In terms of biological role, thought to be a Golgi-localized beta-glycan synthase that polymerize the backbones of noncellulosic polysaccharides (hemicelluloses) of plant cell wall. The sequence is that of Cellulose synthase-like protein G2 (CSLG2) from Arabidopsis thaliana (Mouse-ear cress).